Reading from the N-terminus, the 63-residue chain is DNA gyrase inhibitor YacG (63 aa).

The Zn(2+) site is built by Cys9, Cys12, Cys28, and Cys32.

It belongs to the DNA gyrase inhibitor YacG family. As to quaternary structure, interacts with GyrB. Zn(2+) serves as cofactor.

Functionally, inhibits all the catalytic activities of DNA gyrase by preventing its interaction with DNA. Acts by binding directly to the C-terminal domain of GyrB, which probably disrupts DNA binding by the gyrase. The chain is DNA gyrase inhibitor YacG from Salmonella choleraesuis (strain SC-B67).